An 88-amino-acid chain; its full sequence is Small integral membrane protein 13 (88 aa).

The helical transmembrane segment at 10 to 30 threads the bilayer; the sequence is LVFVATLLIVLLLMVCGWYFV. Positions 48-61 are enriched in polar residues; sequence TGSQEGDNEQPSGS. Residues 48–88 form a disordered region; sequence TGSQEGDNEQPSGSETEEDPSASPQKIRSARQRRPPVDAGH. 2 positions are modified to phosphoserine: S59 and S61. At T63 the chain carries Phosphothreonine. S70 is modified (phosphoserine).

Belongs to the SMIM13 family.

Its subcellular location is the membrane. This Mus musculus (Mouse) protein is Small integral membrane protein 13 (Smim13).